A 217-amino-acid chain; its full sequence is Large ribosomal subunit protein uL29m (217 aa).

Belongs to the universal ribosomal protein uL29 family. As to quaternary structure, component of the mitochondrial large ribosomal subunit. Mature mitochondrial ribosomes consist of a small (37S) and a large (54S) subunit. The 37S subunit contains at least 33 different proteins and 1 molecule of RNA (15S). The 54S subunit contains at least 45 different proteins and 1 molecule of RNA (21S).

The protein localises to the mitochondrion. The protein is Large ribosomal subunit protein uL29m (mrpl4) of Neosartorya fischeri (strain ATCC 1020 / DSM 3700 / CBS 544.65 / FGSC A1164 / JCM 1740 / NRRL 181 / WB 181) (Aspergillus fischerianus).